Here is a 503-residue protein sequence, read N- to C-terminus: Probable DNA double-strand break repair helicase HerA (503 aa).

Residues R122, 131 to 136, and 478 to 479 contribute to the ATP site; these read GGGKSN and KI.

The protein belongs to the HerA family.

It catalyses the reaction Couples ATP hydrolysis with the unwinding of duplex DNA at the replication fork by translocating in the 5'-3' direction. This creates two antiparallel DNA single strands (ssDNA). The leading ssDNA polymer is the template for DNA polymerase III holoenzyme which synthesizes a continuous strand.. The catalysed reaction is ATP + H2O = ADP + phosphate + H(+). It carries out the reaction Couples ATP hydrolysis with the unwinding of duplex DNA by translocating in the 3'-5' direction.. Functionally, involved in DNA double-strand break (DSB) repair. Probably acts with NurA to stimulate resection of the 5' strand and produce the long 3' single-strand that is required for RadA loading. Has DNA-dependent ATPase activity and DNA helicase activity. This is Probable DNA double-strand break repair helicase HerA from Methanocaldococcus jannaschii (strain ATCC 43067 / DSM 2661 / JAL-1 / JCM 10045 / NBRC 100440) (Methanococcus jannaschii).